The sequence spans 354 residues: Fe(3+) ions import ATP-binding protein FbpC (354 aa).

In terms of domain architecture, ABC transporter spans 4-236 (LELHAVHKSF…PRDAQTALFL (233 aa)). 36–43 (GPSGSGKT) provides a ligand contact to ATP.

Belongs to the ABC transporter superfamily. Fe(3+) ion importer (TC 3.A.1.10) family. As to quaternary structure, the complex is composed of two ATP-binding proteins (FbpC), two transmembrane proteins (FbpB) and a solute-binding protein (FbpA).

The protein localises to the cell inner membrane. The catalysed reaction is Fe(3+)(out) + ATP + H2O = Fe(3+)(in) + ADP + phosphate + H(+). In terms of biological role, part of the ABC transporter complex FbpABC involved in Fe(3+) ions import. Responsible for energy coupling to the transport system. The protein is Fe(3+) ions import ATP-binding protein FbpC of Pseudomonas fluorescens (strain ATCC BAA-477 / NRRL B-23932 / Pf-5).